Reading from the N-terminus, the 1222-residue chain is PAN2-PAN3 deadenylation complex catalytic subunit PAN2 (1222 aa).

WD repeat units lie at residues 104 to 143 (PEMT…IVDQ) and 276 to 315 (ANVA…HFNE). The tract at residues 316-451 (IGKETEFSDI…GLKINGETKE (136 aa)) is linker. One can recognise a USP domain in the interval 452 to 821 (DPLLKYSNVE…SPCTLAYQIS (370 aa)). The region spanning 871–1027 (ALDTEFVDLE…WAVFKEYIQE (157 aa)) is the Exonuclease domain. A divalent metal cation-binding residues include Asp-873, Glu-875, and Asp-982. Residues 1035–1067 (TSITTTTNPNIHDANTSTTTTTAITTTPPEGHD) are disordered. Residues 1050–1061 (TSTTTTTAITTT) are compositionally biased toward low complexity. Asp-1071 lines the a divalent metal cation pocket. Disordered stretches follow at residues 1110 to 1152 (PARY…LSGR) and 1167 to 1222 (ASVT…SPMR). Positions 1119–1133 (PNPNNNNINNGVNPN) are enriched in low complexity. The span at 1134–1144 (GLSTPGSTNPI) shows a compositional bias: polar residues. The span at 1180–1191 (NGSMSGSTPSTP) shows a compositional bias: low complexity. Positions 1207–1216 (SFGGAKGLTF) are enriched in gly residues.

It belongs to the peptidase C19 family. PAN2 subfamily. As to quaternary structure, forms a heterotrimer with an asymmetric homodimer of the regulatory subunit PAN3 to form the poly(A)-nuclease (PAN) deadenylation complex. The cofactor is a divalent metal cation.

It is found in the cytoplasm. It catalyses the reaction Exonucleolytic cleavage of poly(A) to 5'-AMP.. Its activity is regulated as follows. Positively regulated by the regulatory subunit PAN3. In terms of biological role, catalytic subunit of the poly(A)-nuclease (PAN) deadenylation complex, one of two cytoplasmic mRNA deadenylases involved in mRNA turnover. PAN specifically shortens poly(A) tails of RNA and the activity is stimulated by poly(A)-binding protein PAB1. PAN deadenylation is followed by rapid degradation of the shortened mRNA tails by the CCR4-NOT complex. Deadenylated mRNAs are then degraded by two alternative mechanisms, namely exosome-mediated 3'-5' exonucleolytic degradation, or deadenylation-dependent mRNA decaping and subsequent 5'-3' exonucleolytic degradation by XRN1. May also be involved in post-transcriptional maturation of mRNA poly(A) tails. This is PAN2-PAN3 deadenylation complex catalytic subunit PAN2 from Coccidioides immitis (strain RS) (Valley fever fungus).